The chain runs to 175 residues: Regenerating islet-derived protein 3-alpha (175 aa).

The N-terminal stretch at 1–26 (MLPHLVLNSISWMLLSCLLFVFQVQG) is a signal peptide. The propeptide occupies 27 to 37 (EDFQKEVPSPR). Intrachain disulfides connect cysteine 40-cysteine 51, cysteine 68-cysteine 171, and cysteine 146-cysteine 163. A C-type lectin domain is found at 47-172 (YRSHCYALVM…CDGTLPFVCK (126 aa)). Zn(2+) is bound by residues histidine 50, histidine 107, glutamate 121, and histidine 145. Positions 103 to 118 (WIGLHDPTMGQQPNGG) are sufficient to activate EXTL3.

Forms a hexameric membrane-permeabilizing oligomeric pore on membrane phospholipids. The hexamer is formed by three dimers related by helical symmetry. Forms filaments, filamentation traps pore complexes and limits damage to host cells. Interacts with EXTL3. In terms of processing, proteolytic processing by trypsin removes an inhibitory N-terminal propeptide and is essential for peptidoglycan binding and antibacterial activity. Small intestine and pancreas.

It is found in the secreted. Functionally, bactericidal C-type lectin. The lack of the EPN motif may explain its inability to bind peptidoglycan. In terms of biological role, acts as a hormone in response to different stimuli like anti-inflammatory signals, such as IL17A, or gut microbiome. Secreted by different cell types to activate its receptor EXTL3 and induce cell specific signaling pathways. Induced by IL17A in keratinocytes, regulates keratinocyte proliferation and differentiation after skin injury via activation of EXTL3-PI3K-AKT signaling pathway. In parallel, inhibits skin inflammation through the inhibition of inflammatory cytokines such as IL6 and TNF. In pancreas, is able to permealize beta-cells membrane and stimulate their proliferation. The sequence is that of Regenerating islet-derived protein 3-alpha (Reg3a) from Mus musculus (Mouse).